Reading from the N-terminus, the 791-residue chain is von Willebrand factor A domain-containing protein 2 (791 aa).

The signal sequence occupies residues M1 to S23. Residues D51–L221 enclose the VWFA 1 domain. N-linked (GlcNAc...) asparagine glycosylation occurs at N146. Residues P295–A332 enclose the EGF-like 1 domain. 3 disulfides stabilise this stretch: C298/C309, C303/C319, and C321/C331. VWFA domains follow at residues D342–L516 and D530–L704. Positions P711–E747 constitute an EGF-like 2 domain. Disulfide bonds link C715-C726, C720-C735, and C737-C746. The interval H762–K791 is disordered.

Forms monomers and multimers. In terms of tissue distribution, detected in uterus, kidney, and skin. Also detected in intestine and lung of adult mice, and in calvaria, femur, brain, heart, intestine, skeletal muscle, and lung of newborn mice.

It is found in the secreted. This is von Willebrand factor A domain-containing protein 2 (Vwa2) from Mus musculus (Mouse).